A 117-amino-acid chain; its full sequence is Ribonuclease P protein component (117 aa).

This sequence belongs to the RnpA family. As to quaternary structure, consists of a catalytic RNA component (M1 or rnpB) and a protein subunit.

The enzyme catalyses Endonucleolytic cleavage of RNA, removing 5'-extranucleotides from tRNA precursor.. RNaseP catalyzes the removal of the 5'-leader sequence from pre-tRNA to produce the mature 5'-terminus. It can also cleave other RNA substrates such as 4.5S RNA. The protein component plays an auxiliary but essential role in vivo by binding to the 5'-leader sequence and broadening the substrate specificity of the ribozyme. The chain is Ribonuclease P protein component from Staphylococcus aureus (strain bovine RF122 / ET3-1).